The primary structure comprises 184 residues: UPF0397 protein SAS2570 (184 aa).

The next 5 helical transmembrane spans lie at 11–31 (VVAIGIGAAVFVILGRFVVIP), 44–64 (AFLALISAIFGPFAGLMTGLV), 77–97 (AWWSWVICSGIIGCLYGWIGL), 111–131 (MIYFNIGQIIANIICWALIAP), and 148–168 (QGVISAVLNIISVGIIGTILL).

The protein belongs to the UPF0397 family.

The protein localises to the cell membrane. The chain is UPF0397 protein SAS2570 from Staphylococcus aureus (strain MSSA476).